The following is a 52-amino-acid chain: Defensin D2 (52 aa).

Intrachain disulfides connect cysteine 8–cysteine 52, cysteine 19–cysteine 39, cysteine 25–cysteine 46, and cysteine 29–cysteine 48.

In terms of tissue distribution, distributed in the epidermal cell layer of leaves and in the subepidermal layer region of stems. Not in roots.

It is found in the secreted. It localises to the cell wall. Functionally, antimicrobial peptide. Active against Fusarium spp., Gram-positive and Gram-negative bacterial pathogens. This chain is Defensin D2, found in Spinacia oleracea (Spinach).